A 543-amino-acid chain; its full sequence is Chaperonin GroEL 2 (543 aa).

ATP-binding positions include 29 to 32 (TLGP), 86 to 90 (DGTTT), Gly413, and Asp495. Positions 524–543 (KPEPKENAPTGAGMGGDFDY) are disordered.

The protein belongs to the chaperonin (HSP60) family. Forms a cylinder of 14 subunits composed of two heptameric rings stacked back-to-back. Interacts with the co-chaperonin GroES.

The protein localises to the cytoplasm. The catalysed reaction is ATP + H2O + a folded polypeptide = ADP + phosphate + an unfolded polypeptide.. Together with its co-chaperonin GroES, plays an essential role in assisting protein folding. The GroEL-GroES system forms a nano-cage that allows encapsulation of the non-native substrate proteins and provides a physical environment optimized to promote and accelerate protein folding. The sequence is that of Chaperonin GroEL 2 from Acaryochloris marina (strain MBIC 11017).